A 347-amino-acid polypeptide reads, in one-letter code: Ribosomal RNA large subunit methyltransferase M (347 aa).

Residues serine 184, 217–220 (APGG), aspartate 236, aspartate 256, and aspartate 272 each bind S-adenosyl-L-methionine. Lysine 301 serves as the catalytic Proton acceptor.

Belongs to the class I-like SAM-binding methyltransferase superfamily. RNA methyltransferase RlmE family. RlmM subfamily. Monomer.

Its subcellular location is the cytoplasm. The catalysed reaction is cytidine(2498) in 23S rRNA + S-adenosyl-L-methionine = 2'-O-methylcytidine(2498) in 23S rRNA + S-adenosyl-L-homocysteine + H(+). Functionally, catalyzes the 2'-O-methylation at nucleotide C2498 in 23S rRNA. In Xanthomonas campestris pv. campestris (strain 8004), this protein is Ribosomal RNA large subunit methyltransferase M.